A 128-amino-acid chain; its full sequence is Translation initiation factor 5A (128 aa).

Lys35 bears the Hypusine mark.

The protein belongs to the eIF-5A family.

It localises to the cytoplasm. Functions by promoting the formation of the first peptide bond. This is Translation initiation factor 5A (eif5a) from Methanosarcina acetivorans (strain ATCC 35395 / DSM 2834 / JCM 12185 / C2A).